Consider the following 125-residue polypeptide: Succinate dehydrogenase assembly factor 3, mitochondrial (125 aa).

The N-terminal 42 residues, 1-42 (MRTTNHLYRTVHRQGKPLLPPLHLYRRILRAHRTFPPAQRAL), are a transit peptide targeting the mitochondrion.

Belongs to the complex I LYR family. SDHAF3 subfamily. Interacts with the iron-sulfur protein subunit within the SDH catalytic dimer.

The protein resides in the mitochondrion matrix. In terms of biological role, plays an essential role in the assembly of succinate dehydrogenase (SDH), an enzyme complex (also referred to as respiratory complex II) that is a component of both the tricarboxylic acid (TCA) cycle and the mitochondrial electron transport chain, and which couples the oxidation of succinate to fumarate with the reduction of ubiquinone (coenzyme Q) to ubiquinol. Promotes maturation of the iron-sulfur protein subunit of the SDH catalytic dimer, protecting it from the deleterious effects of oxidants. May act together with SDHAF1. This Eremothecium gossypii (strain ATCC 10895 / CBS 109.51 / FGSC 9923 / NRRL Y-1056) (Yeast) protein is Succinate dehydrogenase assembly factor 3, mitochondrial.